The sequence spans 269 residues: Formamidopyrimidine-DNA glycosylase (269 aa).

Catalysis depends on Pro-2, which acts as the Schiff-base intermediate with DNA. The Proton donor role is filled by Glu-3. Lys-57 functions as the Proton donor; for beta-elimination activity in the catalytic mechanism. 3 residues coordinate DNA: His-90, Arg-109, and Arg-150. Residues 235–269 (NVYGRAGQPCVQCDAILKADRHGQRSTAYCPQCQR) form an FPG-type zinc finger. Catalysis depends on Arg-259, which acts as the Proton donor; for delta-elimination activity.

This sequence belongs to the FPG family. In terms of assembly, monomer. The cofactor is Zn(2+).

It carries out the reaction Hydrolysis of DNA containing ring-opened 7-methylguanine residues, releasing 2,6-diamino-4-hydroxy-5-(N-methyl)formamidopyrimidine.. It catalyses the reaction 2'-deoxyribonucleotide-(2'-deoxyribose 5'-phosphate)-2'-deoxyribonucleotide-DNA = a 3'-end 2'-deoxyribonucleotide-(2,3-dehydro-2,3-deoxyribose 5'-phosphate)-DNA + a 5'-end 5'-phospho-2'-deoxyribonucleoside-DNA + H(+). Involved in base excision repair of DNA damaged by oxidation or by mutagenic agents. Acts as a DNA glycosylase that recognizes and removes damaged bases. Has a preference for oxidized purines, such as 7,8-dihydro-8-oxoguanine (8-oxoG). Has AP (apurinic/apyrimidinic) lyase activity and introduces nicks in the DNA strand. Cleaves the DNA backbone by beta-delta elimination to generate a single-strand break at the site of the removed base with both 3'- and 5'-phosphates. The sequence is that of Formamidopyrimidine-DNA glycosylase from Alcanivorax borkumensis (strain ATCC 700651 / DSM 11573 / NCIMB 13689 / SK2).